The sequence spans 353 residues: GTPase Obg (353 aa).

An Obg domain is found at methionine 1–isoleucine 159. The OBG-type G domain occupies alanine 160–glycine 327. Residues glycine 166–serine 173, phenylalanine 191–histidine 195, aspartate 212–glycine 215, asparagine 279–aspartate 282, and serine 308–isoleucine 310 contribute to the GTP site. The Mg(2+) site is built by serine 173 and threonine 193. Residues serine 332–alanine 353 form a disordered region.

The protein belongs to the TRAFAC class OBG-HflX-like GTPase superfamily. OBG GTPase family. In terms of assembly, monomer. Requires Mg(2+) as cofactor.

The protein resides in the cytoplasm. Its function is as follows. An essential GTPase which binds GTP, GDP and possibly (p)ppGpp with moderate affinity, with high nucleotide exchange rates and a fairly low GTP hydrolysis rate. Plays a role in control of the cell cycle, stress response, ribosome biogenesis and in those bacteria that undergo differentiation, in morphogenesis control. This Rhodopseudomonas palustris (strain HaA2) protein is GTPase Obg.